We begin with the raw amino-acid sequence, 549 residues long: Glucose-6-phosphate isomerase (549 aa).

The active-site Proton donor is the Glu-353. Active-site residues include His-384 and Lys-513.

Belongs to the GPI family.

It localises to the cytoplasm. The catalysed reaction is alpha-D-glucose 6-phosphate = beta-D-fructose 6-phosphate. It functions in the pathway carbohydrate biosynthesis; gluconeogenesis. Its pathway is carbohydrate degradation; glycolysis; D-glyceraldehyde 3-phosphate and glycerone phosphate from D-glucose: step 2/4. Its function is as follows. Catalyzes the reversible isomerization of glucose-6-phosphate to fructose-6-phosphate. This is Glucose-6-phosphate isomerase from Bartonella bacilliformis (strain ATCC 35685 / KC583 / Herrer 020/F12,63).